The following is a 78-amino-acid chain: Acyl carrier protein (78 aa).

The region spanning 2–77 (SDIAERVKKI…DAIKYIGENM (76 aa)) is the Carrier domain. An O-(pantetheine 4'-phosphoryl)serine modification is found at Ser37.

Belongs to the acyl carrier protein (ACP) family. Post-translationally, 4'-phosphopantetheine is transferred from CoA to a specific serine of apo-ACP by AcpS. This modification is essential for activity because fatty acids are bound in thioester linkage to the sulfhydryl of the prosthetic group.

Its subcellular location is the cytoplasm. It participates in lipid metabolism; fatty acid biosynthesis. Functionally, carrier of the growing fatty acid chain in fatty acid biosynthesis. The protein is Acyl carrier protein of Magnetococcus marinus (strain ATCC BAA-1437 / JCM 17883 / MC-1).